A 339-amino-acid chain; its full sequence is tRNA N6-adenosine threonylcarbamoyltransferase (339 aa).

Positions 111 and 115 each coordinate Fe cation. Residues 139–143 (LVSGG), Asp-172, Gly-185, Asp-189, and Asn-280 each bind substrate. Asp-308 is a Fe cation binding site.

Belongs to the KAE1 / TsaD family. Fe(2+) serves as cofactor.

It is found in the cytoplasm. It catalyses the reaction L-threonylcarbamoyladenylate + adenosine(37) in tRNA = N(6)-L-threonylcarbamoyladenosine(37) in tRNA + AMP + H(+). Its function is as follows. Required for the formation of a threonylcarbamoyl group on adenosine at position 37 (t(6)A37) in tRNAs that read codons beginning with adenine. Is involved in the transfer of the threonylcarbamoyl moiety of threonylcarbamoyl-AMP (TC-AMP) to the N6 group of A37, together with TsaE and TsaB. TsaD likely plays a direct catalytic role in this reaction. This chain is tRNA N6-adenosine threonylcarbamoyltransferase, found in Phocaeicola vulgatus (strain ATCC 8482 / DSM 1447 / JCM 5826 / CCUG 4940 / NBRC 14291 / NCTC 11154) (Bacteroides vulgatus).